The following is a 300-amino-acid chain: MLKKLITTAVLAMLIFTLAACGTTLAPYDAKKDLGEQINYTITGIDAGAGIMLATQNAIKDYHLDDDNWQLQTSSTAAMTSTLQKAMKDKRPIVVTGWTPHWMFTKFDLKFLDDPKNVYGNAENIHTIVRKGLKEDKPSAYQVLDNFFWTAEDMSEVMLEVNDGVDPEEAAKKWIKNNPDKVAKWTDGVEKVDGDEIKLTYVAWDSEIASTNVVAEALKQVGYKPTIQAMEIQPMWASVATDAADGMVAAWLPNTSGIYYKDYKGKFEDLGPNLKGAKIGLAVPKYMTNINSIEDLKTSK.

An N-terminal signal peptide occupies residues 1–20 (MLKKLITTAVLAMLIFTLAA). The N-palmitoyl cysteine moiety is linked to residue Cys-21. Cys-21 carries S-diacylglycerol cysteine lipidation.

The complex is composed of two ATP-binding proteins (GbuA), two transmembrane proteins (GbuB) and a solute-binding protein (GbuC).

Its subcellular location is the cell membrane. Its activity is regulated as follows. The complex is activated by an osmotic gradient or by low temperature. Part of the ABC transporter complex GbuABC involved in glycine betaine uptake. Involved, with BetL and OpuC, in osmoprotection and cryoprotection of Listeria. Can also uptake carnitine when carnitine is abundant in the growth medium. The polypeptide is Glycine betaine/carnitine transport binding protein GbuC (gbuC) (Listeria monocytogenes serotype 1/2a (strain 10403S)).